The following is a 189-amino-acid chain: UPF0232 protein MLBr00004 (189 aa).

The disordered stretch occupies residues 59–78 (TDRRRNWSGPGPDVRDPQPL).

It belongs to the UPF0232 family.

This Mycobacterium leprae (strain Br4923) protein is UPF0232 protein MLBr00004.